The sequence spans 289 residues: Cyclin-dependent kinase 2 homolog (289 aa).

A Protein kinase domain is found at 4-285 (YHGLEKIGEG…AKQAIEHPYF (282 aa)). Residues 10–18 (IGEGTYGVV) and Lys32 contribute to the ATP site. Thr14 carries the phosphothreonine modification. Tyr15 is modified (phosphotyrosine). Asp126 (proton acceptor) is an active-site residue. A Phosphothreonine modification is found at Thr159.

This sequence belongs to the protein kinase superfamily. CMGC Ser/Thr protein kinase family. CDC2/CDKX subfamily. In terms of assembly, may form a complex composed of at least the catalytic subunit CRK2 and a cyclin. It depends on Mg(2+) as a cofactor.

Its subcellular location is the cytoplasm. It carries out the reaction L-seryl-[protein] + ATP = O-phospho-L-seryl-[protein] + ADP + H(+). The catalysed reaction is L-threonyl-[protein] + ATP = O-phospho-L-threonyl-[protein] + ADP + H(+). The enzyme catalyses [DNA-directed RNA polymerase] + ATP = phospho-[DNA-directed RNA polymerase] + ADP + H(+). Phosphorylation at Thr-14 or Tyr-15 inactivates the enzyme, while phosphorylation at Thr-159 activates it. In terms of biological role, serine/threonine-protein kinase. Involved in the control of the cell cycle. Required for entry into S-phase and mitosis. Probable component of the kinase complex that phosphorylates the repetitive C-terminus of RNA polymerase II. In Plasmodium yoelii yoelii, this protein is Cyclin-dependent kinase 2 homolog.